Reading from the N-terminus, the 231-residue chain is CD302 antigen (231 aa).

The N-terminal stretch at 1–21 is a signal peptide; sequence MSAAVVATLPTLLLLLGLAAA. The Extracellular segment spans residues 22-169; that stretch reads DCPSSSWVQF…YEKKYLPDHH (148 aa). The C-type lectin domain maps to 31–153; it reads FQSNCYIFLQ…CEVSSVEGAL (123 aa). An N-linked (GlcNAc...) asparagine glycan is attached at Asn110. A disulfide bond links Cys129 and Cys144. Residues 170-190 form a helical membrane-spanning segment; that stretch reads ILITALVIASTTILTITGAVV. Over 191 to 231 the chain is Cytoplasmic; it reads WFLYKRNLTSGLTNTAYTTAPQLPYNDDCILVDAEENEYVA.

It localises to the membrane. The protein resides in the cell projection. The protein localises to the filopodium. Its subcellular location is the cytoplasm. It is found in the cell cortex. It localises to the microvillus. Functionally, potential multifunctional C-type lectin receptor that may play roles in endocytosis and phagocytosis as well as in cell adhesion and migration. This chain is CD302 antigen, found in Trichosurus vulpecula (Brush-tailed possum).